The sequence spans 1153 residues: uncharacterized protein (1153 aa).

The signal sequence occupies residues 1 to 18 (MNKNIFITLLISLLLLSG). Cys19 carries N-palmitoyl cysteine lipidation. Cys19 is lipidated: S-diacylglycerol cysteine. 4 helical membrane-spanning segments follow: residues 289 to 309 (VSAI…IGNI), 393 to 413 (LGFI…FLIF), 422 to 442 (ALIT…FMLF), and 457 to 477 (ISYA…SMII).

It belongs to the TrbL/VirB6 family.

The protein resides in the cell membrane. This is an uncharacterized protein from Rickettsia conorii (strain ATCC VR-613 / Malish 7).